We begin with the raw amino-acid sequence, 454 residues long: MSDAEATAPRSSWRFAGRDEDDQPSLREVNSTIAVPSSGVWFRRLFAFMGPGYMVSVGYMDPGNWATDLAGGAQFGYTLLFVIMLSNLMAILLQALAARLGIATGRDLAQACRAYYPRPVNFVLWIACELAIIACDLAEVIGTAIALKLLFGIPLIGGAILTALDAFLVLLLMNKGFRYLEAFVIALLIIIFSCFAIQIFVAAPPAGTILHSMFVPSSEIVTNPAMLYIAIGIIGATVMPHNLYLHSSIVQTRAYERTEKGKRDAIKWATTDSTIALMLALFVNAAILIVSAVAFHNTGHQDVAEIDQAFELLSPLLGLGIASILFAVALLASGLNSTVTATLAGQIIMEGFLRLRIPNWARRLLTRGLAIVPVVVVTALYGEKGTGQLLVFSQVILSMQLPFAVVPLVQFVSDKKKMGNLAIPRGVAALAWVVAAIILVLNFKLLYDTLFGVG.

Residues Met1–Asp21 are disordered. 11 consecutive transmembrane segments (helical) span residues Leu45 to Trp65, Thr78 to Ala98, Phe122 to Gly142, Ile153 to Met173, Ala182 to Ala202, Ile220 to Pro240, Ile275 to Phe295, Leu312 to Ala332, Gly368 to Gln388, Leu389 to Val409, and Gly426 to Leu446.

Belongs to the NRAMP family.

Its subcellular location is the cell inner membrane. In terms of biological role, h(+)-stimulated, divalent metal cation uptake system. The polypeptide is Divalent metal cation transporter MntH (Mesorhizobium japonicum (strain LMG 29417 / CECT 9101 / MAFF 303099) (Mesorhizobium loti (strain MAFF 303099))).